We begin with the raw amino-acid sequence, 496 residues long: GTPase Der (496 aa).

2 consecutive EngA-type G domains span residues 3-166 (PVVA…FDNL) and 208-381 (IKLA…RSAT). GTP is bound by residues 9 to 16 (GRPNVGKS), 56 to 60 (DTGGI), 118 to 121 (NKVD), 214 to 221 (GRPNVGKS), 261 to 265 (DTAGV), and 326 to 329 (NKWD). The region spanning 382–466 (TRVGTSVLTR…PIRIQFQNSD (85 aa)) is the KH-like domain.

The protein belongs to the TRAFAC class TrmE-Era-EngA-EngB-Septin-like GTPase superfamily. EngA (Der) GTPase family. Associates with the 50S ribosomal subunit.

In terms of biological role, GTPase that plays an essential role in the late steps of ribosome biogenesis. This chain is GTPase Der, found in Vibrio vulnificus (strain CMCP6).